The primary structure comprises 478 residues: Cysteine protease ATG4B (478 aa).

The span at Met1–Asp15 shows a compositional bias: polar residues. Positions Met1–Gly20 are disordered. The active-site Nucleophile is the Cys164. Catalysis depends on residues Asp361 and His363.

Belongs to the peptidase C54 family. As to quaternary structure, interacts with ATG8. As to expression, constitutively expressed.

Its subcellular location is the cytoplasm. It carries out the reaction [protein]-C-terminal L-amino acid-glycyl-phosphatidylethanolamide + H2O = [protein]-C-terminal L-amino acid-glycine + a 1,2-diacyl-sn-glycero-3-phosphoethanolamine. Its function is as follows. Cysteine protease that plays a key role in autophagy by mediating both proteolytic activation and delipidation of ATG8 family proteins. The protease activity is required for proteolytic activation of ATG8 family proteins: cleaves the C-terminal amino acid of ATG8 proteins to reveal a C-terminal glycine. Exposure of the glycine at the C-terminus is essential for ATG8 proteins conjugation to phosphatidylethanolamine (PE) and insertion to membranes, which is necessary for autophagy. In addition to the protease activity, also mediates delipidation of PE-conjugated ATG8 proteins. This Oryza sativa subsp. indica (Rice) protein is Cysteine protease ATG4B (ATG4B).